The primary structure comprises 156 residues: Endoribonuclease YbeY (156 aa).

Residues His-117, His-121, and His-127 each contribute to the Zn(2+) site.

It belongs to the endoribonuclease YbeY family. It depends on Zn(2+) as a cofactor.

The protein localises to the cytoplasm. Functionally, single strand-specific metallo-endoribonuclease involved in late-stage 70S ribosome quality control and in maturation of the 3' terminus of the 16S rRNA. In Shewanella halifaxensis (strain HAW-EB4), this protein is Endoribonuclease YbeY.